The sequence spans 200 residues: Imidazoleglycerol-phosphate dehydratase (200 aa).

Belongs to the imidazoleglycerol-phosphate dehydratase family.

It is found in the cytoplasm. It carries out the reaction D-erythro-1-(imidazol-4-yl)glycerol 3-phosphate = 3-(imidazol-4-yl)-2-oxopropyl phosphate + H2O. The protein operates within amino-acid biosynthesis; L-histidine biosynthesis; L-histidine from 5-phospho-alpha-D-ribose 1-diphosphate: step 6/9. This chain is Imidazoleglycerol-phosphate dehydratase, found in Chlorobium luteolum (strain DSM 273 / BCRC 81028 / 2530) (Pelodictyon luteolum).